A 168-amino-acid polypeptide reads, in one-letter code: Small ribosomal subunit protein bS6 (168 aa).

Positions 103 to 168 (RQAIAEEKEK…AAADKSDDNA (66 aa)) are disordered. Residues 106 to 115 (IAEEKEKKAE) show a composition bias toward basic and acidic residues. Low complexity predominate over residues 116–125 (GQAAADAAPA).

The protein belongs to the bacterial ribosomal protein bS6 family.

In terms of biological role, binds together with bS18 to 16S ribosomal RNA. This chain is Small ribosomal subunit protein bS6, found in Desulfosudis oleivorans (strain DSM 6200 / JCM 39069 / Hxd3) (Desulfococcus oleovorans).